The sequence spans 125 residues: Glycine cleavage system H protein (125 aa).

One can recognise a Lipoyl-binding domain in the interval 22-104 (SYVIGITDFA…YDTGWILKLE (83 aa)). The residue at position 63 (lysine 63) is an N6-lipoyllysine.

Belongs to the GcvH family. As to quaternary structure, the glycine cleavage system is composed of four proteins: P, T, L and H. (R)-lipoate serves as cofactor.

In terms of biological role, the glycine cleavage system catalyzes the degradation of glycine. The H protein shuttles the methylamine group of glycine from the P protein to the T protein. Functionally, is also involved in protein lipoylation via its role as an octanoyl/lipoyl carrier protein intermediate. In Listeria monocytogenes serotype 4b (strain CLIP80459), this protein is Glycine cleavage system H protein.